The primary structure comprises 240 residues: Ribonuclease PH (240 aa).

Phosphate-binding positions include Arg-87 and 125-127; that span reads GTR.

Belongs to the RNase PH family. Homohexameric ring arranged as a trimer of dimers.

It carries out the reaction tRNA(n+1) + phosphate = tRNA(n) + a ribonucleoside 5'-diphosphate. Its function is as follows. Phosphorolytic 3'-5' exoribonuclease that plays an important role in tRNA 3'-end maturation. Removes nucleotide residues following the 3'-CCA terminus of tRNAs; can also add nucleotides to the ends of RNA molecules by using nucleoside diphosphates as substrates, but this may not be physiologically important. Probably plays a role in initiation of 16S rRNA degradation (leading to ribosome degradation) during starvation. In Dictyoglomus turgidum (strain DSM 6724 / Z-1310), this protein is Ribonuclease PH.